We begin with the raw amino-acid sequence, 414 residues long: MADISYWTLLVPPLAGGVIGYFTNDLAITMLFRPYKPIYIGGKQVPFTPGLIPRNQERLARRIADAILGSLLTPEELQNLARRLLQVQRVKAVIHWLLQTSLSQIQAQSEQRSAQVLANILRDFFGSALPRLMKVWSRREDFLEPQLNQLFDQVLVELQLSDEQAEKLADWLLSVMLPPDRLRLAIIDFLTDRTINVLDQELRQNTSGTYWVVANLVGVRNTLIRLREYCLNEREACNRRLGDLITALALRQRLVEALQNLTLQSLPLGTVRELRQLFRQTVRSYIQEQGASVIETVSQTVEWETISLSILRRLRDSASLGASLEVVSDELALVLDRYLERDMELIVERAIPILDLDRVIVDRVKATSPENLELAIQGIVRSELQAIVRLGGILGFLIGVVQAGVLYWQSLQVP.

Transmembrane regions (helical) follow at residues 2-22 (ADIS…IGYF) and 386-406 (AIVR…AGVL).

It belongs to the UPF0754 family.

The protein localises to the cell inner membrane. The chain is UPF0754 membrane protein tlr2287 from Thermosynechococcus vestitus (strain NIES-2133 / IAM M-273 / BP-1).